Consider the following 200-residue polypeptide: Methyl-coenzyme M reductase I operon protein C (200 aa).

MCR is composed of three subunits: alpha, beta, and gamma. The function of proteins C and D is not known.

This is Methyl-coenzyme M reductase I operon protein C (mcrC) from Methanocaldococcus jannaschii (strain ATCC 43067 / DSM 2661 / JAL-1 / JCM 10045 / NBRC 100440) (Methanococcus jannaschii).